The following is a 413-amino-acid chain: MKCGWREGNQIQLLENGDQFYPAVFEAIAQAQQKIILETFILFEDEVGKKLHAALLKAAQRGVKAEVLLDGYGSPDLSDAFVGELTSAGVIFRYYDPRPRLLGLRTNIFRRMHRKIVVIDDRIAFVGGINYSAEHMSDYGPQAKQDYAVRVEGPVVADILQFEVENLPGQSPARRWWKRHHQAEENRHPGEAQALFVWRDNEEHRDDIERHYLKMLTQAKREVIIANAYFFPGYRLLHAMRKAARRGVSVKLIVQGEPDMPIVKVGARLLYNYLVKGGVQVYEYRRRPLHGKVALMDDHWATVGSSNLDPLSLSLNLEANLIIHDRTFNQTLRDNLQGIIVNDCKQVDESMLPKRTWWNLTKSVLAFHFLRHFPALVGWLPAHTPHLAQVPPPAQPEMETQDRVDPENSGVKP.

PLD phosphodiesterase domains follow at residues 108 to 135 (IFRRMHRKIVVIDDRIAFVGGINYSAEH) and 285 to 312 (RRRPLHGKVALMDDHWATVGSSNLDPLS). Active-site residues include H113, K115, D120, H290, K292, and D297. Positions 388 to 413 (AQVPPPAQPEMETQDRVDPENSGVKP) are disordered.

This sequence belongs to the phospholipase D family. Cardiolipin synthase subfamily. ClsB sub-subfamily.

The protein localises to the cell membrane. It catalyses the reaction 2 a 1,2-diacyl-sn-glycero-3-phospho-(1'-sn-glycerol) = a cardiolipin + glycerol. Its function is as follows. Catalyzes the phosphatidyl group transfer from one phosphatidylglycerol molecule to another to form cardiolipin (CL) (diphosphatidylglycerol) and glycerol. The protein is Cardiolipin synthase B of Salmonella typhi.